The following is a 1067-amino-acid chain: Mediator of RNA polymerase II transcription subunit 5 (1067 aa).

It belongs to the Mediator complex subunit 5 family. As to quaternary structure, component of the Mediator complex.

The protein resides in the nucleus. Component of the Mediator complex, a coactivator involved in the regulated transcription of nearly all RNA polymerase II-dependent genes. Mediator functions as a bridge to convey information from gene-specific regulatory proteins to the basal RNA polymerase II transcription machinery. Mediator is recruited to promoters by direct interactions with regulatory proteins and serves as a scaffold for the assembly of a functional preinitiation complex with RNA polymerase II and the general transcription factors. The chain is Mediator of RNA polymerase II transcription subunit 5 (NUT1) from Kluyveromyces lactis (strain ATCC 8585 / CBS 2359 / DSM 70799 / NBRC 1267 / NRRL Y-1140 / WM37) (Yeast).